Here is a 235-residue protein sequence, read N- to C-terminus: Probable transcriptional regulatory protein Cla_1081 (235 aa).

Belongs to the TACO1 family.

Its subcellular location is the cytoplasm. This is Probable transcriptional regulatory protein Cla_1081 from Campylobacter lari (strain RM2100 / D67 / ATCC BAA-1060).